We begin with the raw amino-acid sequence, 321 residues long: Peptide transport system permease protein SapB (321 aa).

At methionine 1–arginine 8 the chain is on the cytoplasmic side. A helical membrane pass occupies residues leucine 9–phenylalanine 29. Topologically, residues threonine 30 to leucine 80 are periplasmic. The ABC transmembrane type-1 domain maps to phenylalanine 74–serine 302. The helical transmembrane segment at cysteine 81–valine 101 threads the bilayer. Residues threonine 102–alanine 113 are Cytoplasmic-facing. Residues leucine 114–phenylalanine 134 traverse the membrane as a helical segment. Topologically, residues serine 135–glutamate 174 are periplasmic. The chain crosses the membrane as a helical span at residues methionine 175–threonine 195. The Cytoplasmic segment spans residues threonine 196 to glutamine 248. The helical transmembrane segment at phenylalanine 249–glycine 269 threads the bilayer. The Periplasmic portion of the chain corresponds to arginine 270–aspartate 280. Residues tyrosine 281–isoleucine 301 traverse the membrane as a helical segment. The Cytoplasmic portion of the chain corresponds to serine 302–arginine 321.

This sequence belongs to the binding-protein-dependent transport system permease family. OppBC subfamily.

Its subcellular location is the cell inner membrane. In terms of biological role, involved in a peptide intake transport system that plays a role in the resistance to antimicrobial peptides. The protein is Peptide transport system permease protein SapB of Salmonella typhimurium (strain LT2 / SGSC1412 / ATCC 700720).